The following is a 445-amino-acid chain: Serine/threonine-protein kinase Nek2 (445 aa).

Residues 8-271 enclose the Protein kinase domain; it reads YEVLYTIGTG…VEEILENPLI (264 aa). Residues 14 to 22 and Lys-37 each bind ATP; that span reads IGTGSYGRC. Asp-141 acts as the Proton acceptor in catalysis. Thr-170 is modified (phosphothreonine; by autocatalysis). Ser-171 carries the phosphoserine; by autocatalysis modification. Residues Thr-175 and Thr-179 each carry the phosphothreonine; by autocatalysis modification. Residue Ser-184 is modified to Phosphoserine. The residue at position 241 (Ser-241) is a Phosphoserine; by autocatalysis. An interaction with PCNT region spans residues 264-445; it reads EILENPLIAD…LKSRQILGMR (182 aa). A phosphoserine mark is found at Ser-296 and Ser-300. The tract at residues 301-445 is interaction with CEP85; it reads PVLSELKLKE…LKSRQILGMR (145 aa). Residues 303–362 adopt a coiled-coil conformation; the sequence is LSELKLKEIQLQERERALKAREERLEQKEQELCVRERLAEDKLARAENLLKNYSLLKERK. The interval 306 to 334 is leucine-zipper; sequence LKLKEIQLQERERALKAREERLEQKEQEL. Residues 329–445 are necessary for interaction with MAD1L1; the sequence is QKEQELCVRE…LKSRQILGMR (117 aa). Residues 333-370 are required for microtubule binding and for localization to the centrosomes; the sequence is ELCVRERLAEDKLARAENLLKNYSLLKERKFLSLASNP. 2 positions are modified to phosphoserine; by STK3/MST2: Ser-356 and Ser-365. Ser-387, Ser-390, Ser-397, and Ser-402 each carry phosphoserine. Residues 403 to 439 form an interaction with SAV1 and STK3/MST2 region; it reads QLTSKSKCKDLKKRLHAAQLRAQALSDIEKNYQLKSR. Residue Ser-406 is modified to Phosphoserine; by STK3/MST2. A coiled-coil region spans residues 406–430; the sequence is SKSKCKDLKKRLHAAQLRAQALSDI. A Phosphoserine modification is found at Ser-428. Ser-438 is modified (phosphoserine; by STK3/MST2).

This sequence belongs to the protein kinase superfamily. NEK Ser/Thr protein kinase family. NIMA subfamily. As to quaternary structure, isoform 1, isoform 2 and isoform 4 form homo- and heterodimers. Interacts with NECAB3 and HMGA2. Isoform 1 interacts with CDC20, CTNB1, MAD1L1, MAPK, NEK11, NPM1, NDC80, PCNT and SGO1. Isoform 1 interacts with STK3/MST2 (via SARAH domain) and SAV1 (via SARAH domain). Isoform 1 and isoform 2 interact with MAD2L1. Isoform 1 and isoform 4 interact with PPP1CA and PPP1CC. Interacts with CEP68; the interaction leads to phosphorylation of CEP68. Interacts with CNTLN; the interaction leads to phosphorylation of CNTLN. Isoform 1 interacts with CEP85. Interacts with CCDC102B; the interaction leads to phosphorylation of CCDC102B. Mg(2+) is required as a cofactor. Activated by autophosphorylation. Protein phosphatase 1 represses autophosphorylation and activation of isoform 1 by dephosphorylation. Phosphorylation by STK3/MST2 is necessary for its localization to the centrosome. As to expression, isoform 1 and isoform 2 are expressed in peripheral blood T-cells and a wide variety of transformed cell types. Isoform 1 and isoform 4 are expressed in the testis. Up-regulated in various cancer cell lines, as well as primary breast tumors.

Its subcellular location is the nucleus. The protein resides in the nucleolus. It localises to the cytoplasm. The protein localises to the cytoskeleton. It is found in the microtubule organizing center. Its subcellular location is the centrosome. The protein resides in the spindle pole. It localises to the chromosome. The protein localises to the centromere. It is found in the kinetochore. The catalysed reaction is L-seryl-[protein] + ATP = O-phospho-L-seryl-[protein] + ADP + H(+). It catalyses the reaction L-threonyl-[protein] + ATP = O-phospho-L-threonyl-[protein] + ADP + H(+). Its activity is regulated as follows. Isoform 1 is inhibited by ionizing radiation in the presence of PPP1CA. Its catalytic activity is inhibited by the inhibitor CCT241950. In the presence of this inhibitor, displays an autoinhibited conformation: Tyr-70 side chain points into the active site, interacts with the activation loop, and blocks the alphaC helix. Functionally, protein kinase which is involved in the control of centrosome separation and bipolar spindle formation in mitotic cells and chromatin condensation in meiotic cells. Regulates centrosome separation (essential for the formation of bipolar spindles and high-fidelity chromosome separation) by phosphorylating centrosomal proteins such as CROCC, CEP250 and NINL, resulting in their displacement from the centrosomes. Regulates kinetochore microtubule attachment stability in mitosis via phosphorylation of NDC80. Involved in regulation of mitotic checkpoint protein complex via phosphorylation of CDC20 and MAD2L1. Plays an active role in chromatin condensation during the first meiotic division through phosphorylation of HMGA2. Phosphorylates: PPP1CC; SGO1; NECAB3 and NPM1. Essential for localization of MAD2L1 to kinetochore and MAPK1 and NPM1 to the centrosome. Phosphorylates CEP68 and CNTLN directly or indirectly. NEK2-mediated phosphorylation of CEP68 promotes CEP68 dissociation from the centrosome and its degradation at the onset of mitosis. Involved in the regulation of centrosome disjunction. Phosphorylates CCDC102B either directly or indirectly which causes CCDC102B to dissociate from the centrosome and allows for centrosome separation. In terms of biological role, phosphorylates and activates NEK11 in G1/S-arrested cells. Its function is as follows. Not present in the nucleolus and, in contrast to isoform 1, does not phosphorylate and activate NEK11 in G1/S-arrested cells. This chain is Serine/threonine-protein kinase Nek2 (NEK2), found in Homo sapiens (Human).